Consider the following 196-residue polypeptide: Ribonuclease S-F11 (196 aa).

A disulfide bridge links C16 with C21. N28 carries an N-linked (GlcNAc...) asparagine glycan. H32 acts as the Proton donor in catalysis. RNA contacts are provided by residues H32 and 69–70; that span reads QL. 3 disulfide bridges follow: C46–C94, C153–C186, and C169–C180. Q87 is an active-site residue. Position 90-91 (90-91) interacts with RNA; the sequence is KH. The active-site Proton acceptor is H91.

This sequence belongs to the RNase T2 family. In terms of assembly, monomer.

The protein resides in the secreted. Its subcellular location is the extracellular space. The catalysed reaction is a ribonucleotidyl-ribonucleotide-RNA + H2O = a 3'-end 3'-phospho-ribonucleotide-RNA + a 5'-end dephospho-ribonucleoside-RNA + H(+). In terms of biological role, self-incompatibility (SI) is the inherited ability of a flowering plant to prevent self-fertilization by discriminating between self and non-self pollen during pollination. In many species of the Solanaceae, self-incompatibility is controlled by the single, multiallelic locus S. The protein is Ribonuclease S-F11 of Nicotiana alata (Winged tobacco).